The chain runs to 306 residues: Reticulocalbin-2 (306 aa).

The first 22 residues, 1 to 22 (MESPTLLGLLLLLLGGPGTSLG), serve as a signal peptide directing secretion. 6 consecutive EF-hand domains span residues 50–85 (EQQK…SFKS), 86–121 (YIIE…RVID), 144–173 (KKRF…EEAD), 175–210 (MKEF…DPAA), 226–251 (NDYD…NNEG), and 252–287 (LAQE…FLNS). Residues D99, D101, D103, R105, and E110 each contribute to the Ca(2+) site. Ca(2+) is bound by residues D188, D190, D192, E199, D229, D231, D233, K235, E240, D265, D267, D269, R271, and E276.

It belongs to the CREC family. In terms of assembly, may bind phospholipase A2, since the rat reticulocalbin-2 has been isolated on the phospholipase complex taipoxin columns. As to expression, expressed by the venom gland.

It is found in the secreted. This Crotalus adamanteus (Eastern diamondback rattlesnake) protein is Reticulocalbin-2.